The sequence spans 418 residues: Serine--tRNA ligase (418 aa).

Residue 227-229 (TSE) coordinates L-serine. ATP-binding positions include 258-260 (RRE) and Val274. Glu281 is an L-serine binding site. ATP is bound at residue 345–348 (ELTS). Position 380 (Thr380) interacts with L-serine.

The protein belongs to the class-II aminoacyl-tRNA synthetase family. Type-1 seryl-tRNA synthetase subfamily. In terms of assembly, homodimer. The tRNA molecule binds across the dimer.

The protein localises to the cytoplasm. The catalysed reaction is tRNA(Ser) + L-serine + ATP = L-seryl-tRNA(Ser) + AMP + diphosphate + H(+). It carries out the reaction tRNA(Sec) + L-serine + ATP = L-seryl-tRNA(Sec) + AMP + diphosphate + H(+). The protein operates within aminoacyl-tRNA biosynthesis; selenocysteinyl-tRNA(Sec) biosynthesis; L-seryl-tRNA(Sec) from L-serine and tRNA(Sec): step 1/1. Catalyzes the attachment of serine to tRNA(Ser). Is also able to aminoacylate tRNA(Sec) with serine, to form the misacylated tRNA L-seryl-tRNA(Sec), which will be further converted into selenocysteinyl-tRNA(Sec). In Rhodococcus opacus (strain B4), this protein is Serine--tRNA ligase.